A 247-amino-acid chain; its full sequence is TLC domain-containing protein 1 (247 aa).

A signal peptide spans 1–27 (MPLLFHPAWPLLLGATLTFRALRRVLC). Over 28-46 (RLPQPAHVQTDPLRTWRWH) the chain is Extracellular. In terms of domain architecture, TLC spans 40–234 (LRTWRWHNLL…LLRSDFCPER (195 aa)). A helical membrane pass occupies residues 47–67 (NLLVSFTHSIVSGIWALLCLW). Residues 68–83 (QTPEMLVEIETAWSAS) lie on the Cytoplasmic side of the membrane. A helical transmembrane segment spans residues 84–104 (GYLLVCFSAGYFIHDTVDIVV). Residues 105 to 123 (SKQTRASWEYLVHHVMAMG) are Extracellular-facing. Residues 124-144 (AFFSGIFWKRFVGGGVLTLLV) constitute an intramembrane region (helical). Over 145-173 (EVSNIFLTLRMMMKINNAQDLLLYKVNKY) the chain is Extracellular. The helical transmembrane segment at 174–194 (INLVMYFLFRLAPQAYLTKFF) threads the bilayer. Residues 195–201 (LQYAGQR) are Cytoplasmic-facing. Residues 202-222 (TLGTFLLAILLMLDLMIIIYF) traverse the membrane as a helical segment. Residues 223–247 (SRLLRSDFCPERAPRRQQKDKFLTE) lie on the Extracellular side of the membrane.

The protein localises to the cell membrane. Its function is as follows. Regulates the composition and fluidity of the plasma membrane. Inhibits the incorporation of membrane-fluidizing phospholipids containing omega-3 long-chain polyunsaturated fatty acids (LCPUFA) and thereby promotes membrane rigidity. Does not appear to have any effect on LCPUFA synthesis. The protein is TLC domain-containing protein 1 (Tlcd1) of Mus musculus (Mouse).